The following is a 416-amino-acid chain: ATP-dependent Clp protease ATP-binding subunit ClpX (416 aa).

The ClpX-type ZB domain occupies 1–54 (MFKFGDEKGQLKCSFCGKSQEQVRKLVAGPGVYICDECIELCNEIIEEELNDDV). Zn(2+)-binding residues include Cys13, Cys16, Cys35, and Cys38. Position 117–124 (117–124 (PTGCGKTL)) interacts with ATP.

The protein belongs to the ClpX chaperone family. In terms of assembly, component of the ClpX-ClpP complex. Forms a hexameric ring that, in the presence of ATP, binds to fourteen ClpP subunits assembled into a disk-like structure with a central cavity, resembling the structure of eukaryotic proteasomes.

ATP-dependent specificity component of the Clp protease. It directs the protease to specific substrates. Can perform chaperone functions in the absence of ClpP. The protein is ATP-dependent Clp protease ATP-binding subunit ClpX of Halothermothrix orenii (strain H 168 / OCM 544 / DSM 9562).